The following is a 187-amino-acid chain: Elongation factor P (187 aa).

The protein belongs to the elongation factor P family.

It is found in the cytoplasm. Its pathway is protein biosynthesis; polypeptide chain elongation. Functionally, involved in peptide bond synthesis. Stimulates efficient translation and peptide-bond synthesis on native or reconstituted 70S ribosomes in vitro. Probably functions indirectly by altering the affinity of the ribosome for aminoacyl-tRNA, thus increasing their reactivity as acceptors for peptidyl transferase. The sequence is that of Elongation factor P from Mycoplasmopsis pulmonis (strain UAB CTIP) (Mycoplasma pulmonis).